Here is a 373-residue protein sequence, read N- to C-terminus: UDP-N-acetylglucosamine--N-acetylmuramyl-(pentapeptide) pyrophosphoryl-undecaprenol N-acetylglucosamine transferase (373 aa).

UDP-N-acetyl-alpha-D-glucosamine contacts are provided by residues 14–16 (TAG), Asn128, Arg165, Ser199, and Gln295.

This sequence belongs to the glycosyltransferase 28 family. MurG subfamily.

The protein resides in the cell membrane. It carries out the reaction di-trans,octa-cis-undecaprenyl diphospho-N-acetyl-alpha-D-muramoyl-L-alanyl-D-glutamyl-meso-2,6-diaminopimeloyl-D-alanyl-D-alanine + UDP-N-acetyl-alpha-D-glucosamine = di-trans,octa-cis-undecaprenyl diphospho-[N-acetyl-alpha-D-glucosaminyl-(1-&gt;4)]-N-acetyl-alpha-D-muramoyl-L-alanyl-D-glutamyl-meso-2,6-diaminopimeloyl-D-alanyl-D-alanine + UDP + H(+). Its pathway is cell wall biogenesis; peptidoglycan biosynthesis. Its function is as follows. Cell wall formation. Catalyzes the transfer of a GlcNAc subunit on undecaprenyl-pyrophosphoryl-MurNAc-pentapeptide (lipid intermediate I) to form undecaprenyl-pyrophosphoryl-MurNAc-(pentapeptide)GlcNAc (lipid intermediate II). This is UDP-N-acetylglucosamine--N-acetylmuramyl-(pentapeptide) pyrophosphoryl-undecaprenol N-acetylglucosamine transferase from Mycobacterium sp. (strain JLS).